We begin with the raw amino-acid sequence, 206 residues long: MARYIGPKCKLSRREGTDLFLKSGVRALESKCNIEAAPGIHGQRRGRQSDYGTQLREKQKVRRIYGVLERQFRGYYQAAASKKGATGENLLQLLECRLDNVVYRMGFGSTRSESRQLVSHKAISVNGKTVNIPSYQVRPGDVVAVREKSSNQLRIVQALELCAQRGRVEWVDVDSAKKSGVFKNVPARGDLSADINENLIVELYSK.

The S4 RNA-binding domain occupies 96–156; that stretch reads CRLDNVVYRM…EKSSNQLRIV (61 aa).

It belongs to the universal ribosomal protein uS4 family. As to quaternary structure, part of the 30S ribosomal subunit. Contacts protein S5. The interaction surface between S4 and S5 is involved in control of translational fidelity.

In terms of biological role, one of the primary rRNA binding proteins, it binds directly to 16S rRNA where it nucleates assembly of the body of the 30S subunit. With S5 and S12 plays an important role in translational accuracy. This is Small ribosomal subunit protein uS4 from Pseudomonas putida (strain W619).